We begin with the raw amino-acid sequence, 596 residues long: Transketolase-like protein 1 (596 aa).

His-46 lines the substrate pocket. Thiamine diphosphate-binding positions include Ser-49 and 94 to 96; that span reads GWL. Asp-126 is a Mg(2+) binding site. Gly-127 and Asn-156 together coordinate thiamine diphosphate. Residues Asn-156 and Leu-158 each coordinate Mg(2+). 2 residues coordinate thiamine diphosphate: Lys-218 and His-232. Substrate contacts are provided by His-232, Arg-292, and Ser-319. 2 residues coordinate thiamine diphosphate: Glu-340 and Phe-366. The active-site Proton donor is the Glu-340. The substrate site is built by His-390 and Asp-398. A thiamine diphosphate-binding site is contributed by Gln-402. Arg-448 contacts substrate.

Belongs to the transketolase family. In terms of assembly, homodimer. Mg(2+) serves as cofactor. It depends on Ca(2+) as a cofactor. The cofactor is Mn(2+). Requires Co(2+) as cofactor. Thiamine diphosphate is required as a cofactor. Widely expressed. Expressed in endothelial cells and in peripheral neurons (at protein level). As to expression, not expressed in fetal neocortex. In terms of tissue distribution, expressed in fetal neocortex.

The protein localises to the cytoplasm. It catalyses the reaction D-sedoheptulose 7-phosphate + D-glyceraldehyde 3-phosphate = aldehydo-D-ribose 5-phosphate + D-xylulose 5-phosphate. In terms of biological role, catalyzes the transfer of a two-carbon ketol group from a ketose donor to an aldose acceptor, via a covalent intermediate with the cofactor thiamine pyrophosphate. Functionally, during fetal neocortex development, may be essential to maintain the full number of basal radial glia (bRG). bRG are neural progenitor cells that undergo asymmetric divisions, generating a bRG (self-renewal) and a neuron, in contrast to basal intermediate progenitors (bIPs), which typically divide once to give rise to 2 neurons. bRG generate more cortical neurons over time than bIPs. This Homo sapiens (Human) protein is Transketolase-like protein 1 (TKTL1).